The following is a 527-amino-acid chain: tRNA pseudouridine synthase Pus10 (527 aa).

2 residues coordinate Zn(2+): cysteine 21 and cysteine 24. Residues 42-87 are a coiled coil; sequence KELLNELQKFLEPEKPELILEAPNPPLKKIRLHEDGIDNLSEDGKE. A Phosphoserine modification is found at serine 82. Residues cysteine 107 and cysteine 110 each contribute to the Zn(2+) site. Residues 302–315 are RNA binding forefinger loop; the sequence is TPWIIDGERKMESS. The active-site Nucleophile is the aspartate 342. The interval 440–455 is RNA binding thumb loop; it reads QKTPLRVLHRRPLAVR.

It belongs to the pseudouridine synthase Pus10 family. Interacts with components of the microprocessor complex DROSHA and DGCR8. Proteolytically cleaved during TRAIL-induced cell death. Cleaved, in vitro, either by caspase-3 (CASP3) or caspase-8 (CASP8).

The protein localises to the nucleus. It localises to the cytoplasm. The protein resides in the mitochondrion. The enzyme catalyses uridine(55) in tRNA = pseudouridine(55) in tRNA. The catalysed reaction is uridine(54) in tRNA = pseudouridine(54) in tRNA. In terms of biological role, protein with different functions depending on its subcellular location: involved in miRNA processing in the nucleus and acts as a tRNA pseudouridylate synthase in the cytoplasm. In the cytoplasm, acts as a pseudouridylate synthase by catalyzing synthesis of pseudouridine(54) and pseudouridine(55) from uracil-54 and uracil-55, respectively, in the psi GC loop of a subset of tRNAs. tRNA pseudouridylate synthase activity is enhanced by the presence of 1-methyladenosine at position 53-61 of tRNAs. Does not show tRNA pseudouridylate synthase activity in the nucleus. In the nucleus, promotes primary microRNAs (pri-miRNAs) processing independently of its RNA pseudouridylate synthase activity. Binds pri-miRNAs. Modulator of TRAIL/TNFSF10-induced cell death via activation of procaspase-8 and BID cleavage. Required for the progression of the apoptotic signal through intrinsic mitochondrial cell death. The chain is tRNA pseudouridine synthase Pus10 from Mus musculus (Mouse).